Consider the following 200-residue polypeptide: Dephospho-CoA kinase (200 aa).

The region spanning 4-200 is the DPCK domain; that stretch reads VIGLTGGIAS…VILKKWNIID (197 aa). 12–17 lines the ATP pocket; sequence ASGKST.

This sequence belongs to the CoaE family.

It localises to the cytoplasm. It catalyses the reaction 3'-dephospho-CoA + ATP = ADP + CoA + H(+). Its pathway is cofactor biosynthesis; coenzyme A biosynthesis; CoA from (R)-pantothenate: step 5/5. Its function is as follows. Catalyzes the phosphorylation of the 3'-hydroxyl group of dephosphocoenzyme A to form coenzyme A. The sequence is that of Dephospho-CoA kinase from Bacillus cereus (strain ATCC 14579 / DSM 31 / CCUG 7414 / JCM 2152 / NBRC 15305 / NCIMB 9373 / NCTC 2599 / NRRL B-3711).